Reading from the N-terminus, the 206-residue chain is Endoplasmic reticulum transmembrane protein 1 (206 aa).

The Lumenal portion of the chain corresponds to 1–7 (MSLYFTT). The helical transmembrane segment at 8-28 (LFLLLTVEMVMLFIFVLPLPF) threads the bilayer. The Cytoplasmic segment spans residues 29 to 45 (RIRRGIFSTYNQLTAKQ). A helical transmembrane segment spans residues 46–66 (QIKTIIFITGCLVGLLFIDSW). Topologically, residues 67 to 104 (KRSQIRVSLYHNDNSGSIGSSAVTPIQALASRAYNQRN) are lumenal. The chain crosses the membrane as a helical span at residues 105–125 (MYISGFILYFSICIPTVMSIV). Residues 126–206 (KRLVKYQGLI…AAAEASKKGN (81 aa)) are Cytoplasmic-facing. The tract at residues 140–163 (KQKLNKPSSNSKKDSNEADSTKLQ) is disordered. Positions 150–163 (SKKDSNEADSTKLQ) are enriched in basic and acidic residues. A Glycyl lysine isopeptide (Lys-Gly) (interchain with G-Cter in ubiquitin) cross-link involves residue Lys190. The Di-lysine motif motif lies at 203–206 (KKGN).

It belongs to the BCAP29/BCAP31 family.

It is found in the endoplasmic reticulum membrane. Its function is as follows. May play a role in anterograde transport of membrane proteins from the endoplasmic reticulum to the Golgi. The polypeptide is Endoplasmic reticulum transmembrane protein 1 (YET1) (Saccharomyces cerevisiae (strain ATCC 204508 / S288c) (Baker's yeast)).